The following is a 56-amino-acid chain: MAAKGNREKIRLVSSAETGHFYTTTKNKRNMPEKMEIKKFDPVVRKHVIYKEAKIK.

This sequence belongs to the bacterial ribosomal protein bL33 family.

The protein is Large ribosomal subunit protein bL33 of Actinobacillus pleuropneumoniae serotype 5b (strain L20).